The following is a 442-amino-acid chain: Protein cereblon (442 aa).

The interval 1 to 45 is disordered; it reads MAGEGDQQDAAHNMGNHLPLLPAESEEEDEMEVEDQDSKEAKKPN. Positions 24–35 are enriched in acidic residues; that stretch reads ESEEEDEMEVED. Phosphoserine is present on Ser-25. Residues 81 to 319 enclose the Lon N-terminal domain; the sequence is IPVLPQVMMI…CELDIMNKCT (239 aa). Residues 318-426 form the CULT domain; that stretch reads CTSLCCKQCQ…LTRSALLPTI (109 aa). Cys-323 and Cys-326 together coordinate Zn(2+). Positions 378, 380, and 386 each coordinate (S)-thalidomide. Zn(2+) contacts are provided by Cys-391 and Cys-394.

Belongs to the CRBN family. In terms of assembly, interacts with KCNT1. Component of a DCX (DDB1-CUL4-X-box) protein ligase complex, at least composed of CRBN, CUL4A, DDB1 and RBX1. Interacts directly with DDB1. Interacts (in pomalidomide-bound form) with IKZF1 and IKZF3. Interacts with ILF2. Interacts with TRAF6 and ECSIT. Ubiquitinated, ubiquitination is mediated by its own DCX protein ligase complex. In terms of tissue distribution, widely expressed. Highly expressed in brain.

It is found in the cytoplasm. Its subcellular location is the nucleus. The protein localises to the membrane. Its pathway is protein modification; protein ubiquitination. In terms of biological role, substrate recognition component of a DCX (DDB1-CUL4-X-box) E3 protein ligase complex that mediates the ubiquitination and subsequent proteasomal degradation of target proteins, such as MEIS2, ILF2 or GLUL. Normal degradation of key regulatory proteins is required for normal limb outgrowth and expression of the fibroblast growth factor FGF8. Maintains presynaptic glutamate release and consequently cognitive functions, such as memory and learning, by negatively regulating large-conductance calcium-activated potassium (BK) channels in excitatory neurons. Likely to function by regulating the assembly and neuronal surface expression of BK channels via its interaction with KCNT1. May also be involved in regulating anxiety-like behaviors via a BK channel-independent mechanism. Plays a negative role in TLR4 signaling by interacting with TRAF6 and ECSIT, leading to inhibition of ECSIT ubiquitination, an important step of the signaling. In Homo sapiens (Human), this protein is Protein cereblon (CRBN).